The chain runs to 369 residues: 4-hydroxy-3-methylbut-2-en-1-yl diphosphate synthase (flavodoxin) (369 aa).

[4Fe-4S] cluster-binding residues include Cys270, Cys273, Cys305, and Glu312.

It belongs to the IspG family. [4Fe-4S] cluster serves as cofactor.

The catalysed reaction is (2E)-4-hydroxy-3-methylbut-2-enyl diphosphate + oxidized [flavodoxin] + H2O + 2 H(+) = 2-C-methyl-D-erythritol 2,4-cyclic diphosphate + reduced [flavodoxin]. It participates in isoprenoid biosynthesis; isopentenyl diphosphate biosynthesis via DXP pathway; isopentenyl diphosphate from 1-deoxy-D-xylulose 5-phosphate: step 5/6. In terms of biological role, converts 2C-methyl-D-erythritol 2,4-cyclodiphosphate (ME-2,4cPP) into 1-hydroxy-2-methyl-2-(E)-butenyl 4-diphosphate. This Pseudomonas syringae pv. syringae (strain B728a) protein is 4-hydroxy-3-methylbut-2-en-1-yl diphosphate synthase (flavodoxin).